Reading from the N-terminus, the 482-residue chain is High affinity 3',5'-cyclic-AMP phosphodiesterase 7A (482 aa).

Ser-84 is modified (phosphoserine). The PDEase domain maps to 136 to 458; the sequence is LDDDYNGQAK…ASWKGLQREQ (323 aa). His-212 acts as the Proton donor in catalysis. A divalent metal cation-binding residues include His-216, His-252, Asp-253, and Asp-362.

The protein belongs to the cyclic nucleotide phosphodiesterase family. PDE7 subfamily. In terms of assembly, interacts with CBFA2T3. A divalent metal cation is required as a cofactor. In terms of tissue distribution, found at high levels in skeletal muscle and at low levels in a variety of tissues including brain and heart. It is expressed as well in two T-cell lines. As to expression, found abundantly in skeletal muscle and at low levels in heart.

It is found in the cytoplasm. The protein resides in the cytosol. It catalyses the reaction 3',5'-cyclic AMP + H2O = AMP + H(+). It functions in the pathway purine metabolism; 3',5'-cyclic AMP degradation; AMP from 3',5'-cyclic AMP: step 1/1. Insensitive to all selective PDE inhibitors. In terms of biological role, hydrolyzes the second messenger cAMP, which is a key regulator of many important physiological processes. May have a role in muscle signal transduction. This chain is High affinity 3',5'-cyclic-AMP phosphodiesterase 7A, found in Homo sapiens (Human).